A 221-amino-acid chain; its full sequence is MDPVVLSYMDSLLRQSDVSLLDPPSWLNDHIIGFAFEYFANSQFHDCSDHVCFISPEVTQFIKCTSSPAEIAMFLEPLDLPHKRVVFLAINDNSNQAAGGTHWSLLVYLQDKNSFFHYDSHSRSNSIHAKQVAEKLKAFLGSKGDKLVFVEEKAPAQENSYDCGMYVICNTEALCQSLFRRQPESPLQLLTPTYITKKRGEWKDLIARLAKKNEVATEECS.

Met1 is modified (N-acetylmethionine). The tract at residues 11-174 is protease; sequence SLLRQSDVSL…MYVICNTEAL (164 aa). Catalysis depends on residues His102 and Asp119. The Nucleophile role is filled by Cys163.

The protein belongs to the peptidase C48 family.

Protease that catalyzes two essential functions in the NEDD8 pathway: processing of full-length NEDD8 to its mature form and deconjugation of NEDD8 from targeted proteins such as cullins or p53. The protein is Sentrin-specific protease 8 (Senp8) of Mus musculus (Mouse).